A 468-amino-acid polypeptide reads, in one-letter code: Protein ABHD15 (468 aa).

The signal sequence occupies residues 1–23 (MPPWGAALALILAVLALLGLLGP). The disordered stretch occupies residues 33–61 (VGERTLPGAQDRDDGEEADGGGPADQFSD). Catalysis depends on charge relay system residues Asp-360 and His-391. Ser-434 carries the post-translational modification Phosphoserine.

This sequence belongs to the AB hydrolase superfamily. AB hydrolase 4 family. As to quaternary structure, interacts with PDE3B; this interaction regulates PDE3B's stability and expression and, thereby, impacts the antilipolytic action of insulin.

It localises to the secreted. May regulate adipocyte lipolysis and liver lipid accumulation. In Homo sapiens (Human), this protein is Protein ABHD15.